A 415-amino-acid polypeptide reads, in one-letter code: CCA-adding enzyme (415 aa).

ATP is bound by residues S52 and R55. 2 residues coordinate CTP: S52 and R55. Mg(2+) is bound by residues D64, D66, and D116. 3 residues coordinate ATP: H139, K159, and Y168. H139, K159, and Y168 together coordinate CTP.

Belongs to the tRNA nucleotidyltransferase/poly(A) polymerase family. Archaeal CCA-adding enzyme subfamily. As to quaternary structure, homodimer. The cofactor is Mg(2+).

The catalysed reaction is a tRNA precursor + 2 CTP + ATP = a tRNA with a 3' CCA end + 3 diphosphate. It carries out the reaction a tRNA with a 3' CCA end + 2 CTP + ATP = a tRNA with a 3' CCACCA end + 3 diphosphate. In terms of biological role, catalyzes the addition and repair of the essential 3'-terminal CCA sequence in tRNAs without using a nucleic acid template. Adds these three nucleotides in the order of C, C, and A to the tRNA nucleotide-73, using CTP and ATP as substrates and producing inorganic pyrophosphate. tRNA 3'-terminal CCA addition is required both for tRNA processing and repair. Also involved in tRNA surveillance by mediating tandem CCA addition to generate a CCACCA at the 3' terminus of unstable tRNAs. While stable tRNAs receive only 3'-terminal CCA, unstable tRNAs are marked with CCACCA and rapidly degraded. The sequence is that of CCA-adding enzyme from Pyrobaculum neutrophilum (strain DSM 2338 / JCM 9278 / NBRC 100436 / V24Sta) (Thermoproteus neutrophilus).